The following is a 1644-amino-acid chain: Terminal uridylyltransferase 4 (1644 aa).

Disordered stretches follow at residues serine 30–aspartate 60 and alanine 75–tyrosine 277. Position 102 is a phosphoserine (serine 102). The segment covering lysine 108 to threonine 123 has biased composition (polar residues). A Phosphoserine modification is found at serine 131. 2 stretches are compositionally biased toward polar residues: residues alanine 146–serine 156 and threonine 163–proline 174. Phosphoserine is present on serine 176. Composition is skewed to polar residues over residues glutamine 194 to valine 209 and leucine 226 to isoleucine 242. Over residues aspartate 258–serine 272 the composition is skewed to basic and acidic residues. Residues serine 273–leucine 353 form a required for interaction with LIN28A and pre-let-7 RNA region. Zn(2+)-binding residues include cysteine 326, cysteine 329, histidine 342, and histidine 348. Positions isoleucine 603 to threonine 623 are enriched in basic and acidic residues. Positions isoleucine 603–threonine 640 are disordered. A PAP-associated 1 domain is found at leucine 649–serine 698. Disordered stretches follow at residues lysine 733 to aspartate 759 and histidine 812 to proline 841. Positions lysine 745–proline 755 are enriched in basic residues. The span at aspartate 815 to aspartate 827 shows a compositional bias: low complexity. A compositionally biased stretch (basic and acidic residues) spans leucine 828 to glycine 837. Residues aspartate 918–cysteine 1634 are sufficient for monouridylation activity. The CCHC-type 1 zinc-finger motif lies at isoleucine 930–glutamate 947. UTP is bound by residues serine 1015–asparagine 1018, serine 1025–aspartate 1028, asparagine 1098, lysine 1120, serine 1138–isoleucine 1142, and histidine 1254. Mg(2+) contacts are provided by aspartate 1026 and aspartate 1028. Positions serine 1201–histidine 1254 constitute a PAP-associated 2 domain. A CCHC-type 2 zinc finger spans residues arginine 1310–lysine 1327. Residues lysine 1329–arginine 1350 are disordered. Residues leucine 1358–glutamate 1375 form a CCHC-type 3 zinc finger. Positions alanine 1402–tyrosine 1427 are enriched in low complexity. A disordered region spans residues alanine 1402–alanine 1483. Pro residues predominate over residues serine 1428–glutamine 1450. Residues proline 1451 to proline 1473 show a composition bias toward low complexity. An Omega-N-methylarginine modification is found at arginine 1624.

The protein belongs to the DNA polymerase type-B-like family. As to quaternary structure, interacts with LIN28A in the presence of pre-let-7 RNA. Interacts with T2BP. Interacts with MOV10; the interaction is RNA-dependent. Requires Mg(2+) as cofactor. It depends on Mn(2+) as a cofactor. Ubiquitously expressed.

Its subcellular location is the nucleus. The protein resides in the cytoplasm. The protein localises to the cytoplasmic ribonucleoprotein granule. The enzyme catalyses RNA(n) + UTP = RNA(n)-3'-uridine ribonucleotide + diphosphate. Uridylyltransferase that mediates the terminal uridylation of mRNAs with short (less than 25 nucleotides) poly(A) tails, hence facilitating global mRNA decay. Essential for both oocyte maturation and fertility. Through 3' terminal uridylation of mRNA, sculpts, with TUT7, the maternal transcriptome by eliminating transcripts during oocyte growth. Involved in microRNA (miRNA)-induced gene silencing through uridylation of deadenylated miRNA targets. Also functions as an integral regulator of microRNA biogenesiS using 3 different uridylation mechanisms. Acts as a suppressor of miRNA biogenesis by mediating the terminal uridylation of some miRNA precursors, including that of let-7 (pre-let-7), miR107, miR-143 and miR-200c. Uridylated miRNAs are not processed by Dicer and undergo degradation. Degradation of pre-let-7 contributes to the maintenance of embryonic stem (ES) cell pluripotency. Also catalyzes the 3' uridylation of miR-26A, a miRNA that targets IL6 transcript. This abrogates the silencing of IL6 transcript, hence promoting cytokine expression. In the absence of LIN28A, TUT7 and TUT4 monouridylate group II pre-miRNAs, which includes most of pre-let7 members, that shapes an optimal 3' end overhang for efficient processing. Add oligo-U tails to truncated pre-miRNAS with a 5' overhang which may promote rapid degradation of non-functional pre-miRNA species. May also suppress Toll-like receptor-induced NF-kappa-B activation via binding to T2BP. Does not play a role in replication-dependent histone mRNA degradation. Due to functional redundancy between TUT4 and TUT7, the identification of the specific role of each of these proteins is difficult. TUT4 and TUT7 restrict retrotransposition of long interspersed element-1 (LINE-1) in cooperation with MOV10 counteracting the RNA chaperonne activity of L1RE1. TUT7 uridylates LINE-1 mRNAs in the cytoplasm which inhibits initiation of reverse transcription once in the nucleus, whereas uridylation by TUT4 destabilizes mRNAs in cytoplasmic ribonucleoprotein granules. This Mus musculus (Mouse) protein is Terminal uridylyltransferase 4.